A 72-amino-acid polypeptide reads, in one-letter code: Translation initiation factor IF-1 (72 aa).

Residues 1–72 (MAKEEQIELE…TKGRITFRMK (72 aa)) form the S1-like domain.

Belongs to the IF-1 family. Component of the 30S ribosomal translation pre-initiation complex which assembles on the 30S ribosome in the order IF-2 and IF-3, IF-1 and N-formylmethionyl-tRNA(fMet); mRNA recruitment can occur at any time during PIC assembly.

It is found in the cytoplasm. One of the essential components for the initiation of protein synthesis. Stabilizes the binding of IF-2 and IF-3 on the 30S subunit to which N-formylmethionyl-tRNA(fMet) subsequently binds. Helps modulate mRNA selection, yielding the 30S pre-initiation complex (PIC). Upon addition of the 50S ribosomal subunit IF-1, IF-2 and IF-3 are released leaving the mature 70S translation initiation complex. The sequence is that of Translation initiation factor IF-1 from Alcanivorax borkumensis (strain ATCC 700651 / DSM 11573 / NCIMB 13689 / SK2).